The following is a 383-amino-acid chain: S-adenosylmethionine synthase (383 aa).

Position 15 (His-15) interacts with ATP. Residue Asp-17 coordinates Mg(2+). Glu-43 is a binding site for K(+). L-methionine-binding residues include Glu-56 and Gln-99. Residues 99 to 109 (QSPDINQGVDR) form a flexible loop region. Residues 164 to 166 (DAK), 230 to 231 (RF), Asp-239, 245 to 246 (RK), Ala-262, and Lys-266 contribute to the ATP site. Position 239 (Asp-239) interacts with L-methionine. Lys-270 is an L-methionine binding site.

This sequence belongs to the AdoMet synthase family. Homotetramer; dimer of dimers. Requires Mg(2+) as cofactor. It depends on K(+) as a cofactor.

It localises to the cytoplasm. The enzyme catalyses L-methionine + ATP + H2O = S-adenosyl-L-methionine + phosphate + diphosphate. It participates in amino-acid biosynthesis; S-adenosyl-L-methionine biosynthesis; S-adenosyl-L-methionine from L-methionine: step 1/1. Its function is as follows. Catalyzes the formation of S-adenosylmethionine (AdoMet) from methionine and ATP. The overall synthetic reaction is composed of two sequential steps, AdoMet formation and the subsequent tripolyphosphate hydrolysis which occurs prior to release of AdoMet from the enzyme. This is S-adenosylmethionine synthase from Shewanella sp. (strain ANA-3).